A 1237-amino-acid chain; its full sequence is Anion exchange protein 2 (1237 aa).

The tract at residues 1 to 237 is disordered; the sequence is MSSAPRRPAS…SYNLQERRRI (237 aa). Residues 1 to 703 are Cytoplasmic-facing; it reads MSSAPRRPAS…SDFRDALDPQ (703 aa). Basic and acidic residues-rich tracts occupy residues 37–49 and 58–75; these read ELHR…RFEE and GGEE…EYHR. 2 stretches are compositionally biased toward basic residues: residues 76–85 and 94–110; these read QSSHHIHHPL and RRRK…RRRP. At Ser-113 the chain carries Phosphoserine. Residues 122–133 show a composition bias toward acidic residues; sequence EEGEEDEEEANE. The span at 137 to 151 shows a compositional bias: low complexity; that stretch reads ARAPTEPSPASTPSS. Ser-144, Ser-170, and Ser-172 each carry phosphoserine. Over residues 206 to 215 the composition is skewed to gly residues; sequence TAGGDNGGAS. The residue at position 239 (Ser-239) is a Phosphoserine. Thr-253 is subject to Phosphothreonine. Lys-270 carries the post-translational modification N6-methyllysine. Positions 281 to 316 are disordered; sequence RRHLVRKNAKGSAQSSREGREPGPTPRSRPRAPHKP. Ser-439 bears the Phosphoserine mark. The segment at 445–464 is disordered; sequence SLLGHHHGQGAESDPHVTEP. A run of 4 helical transmembrane segments spans residues 704 to 727, 733 to 770, 790 to 812, and 822 to 843; these read CVAA…GLLG, LIGV…LLVF, VWIG…SFLV, and IFAF…IKIF. Positions 704–1237 are membrane (anion exchange); that stretch reads CVAAVIFIYF…DEYNEMPMPV (534 aa). Topologically, residues 844 to 896 are extracellular; that stretch reads QEHPLHGCSVSNSSETDSSENATWAGAGSTLGPANRSSAGQAGQGRPRGQPNT. Asn-855, Asn-864, and Asn-878 each carry an N-linked (GlcNAc...) asparagine glycan. Residues 897-914 traverse the membrane as a helical segment; that stretch reads ALLSLVLMAGTFFIAFFL. Over 915–929 the chain is Cytoplasmic; that stretch reads RKFKNSRFFPGRIRR. A run of 5 helical transmembrane segments spans residues 930–950, 984–1006, 1032–1053, 1087–1132, and 1159–1195; these read VIGD…DYSI, PFPV…LIFM, LLLI…LAAA, VTGL…IQFY, and MHLF…TVPL. Cys-1169 is lipidated: S-palmitoyl cysteine.

This sequence belongs to the anion exchanger (TC 2.A.31) family. In terms of tissue distribution, expressed in the ileum (at protein level).

The protein localises to the cell membrane. It is found in the apical cell membrane. It localises to the basolateral cell membrane. It carries out the reaction hydrogencarbonate(in) + chloride(out) = hydrogencarbonate(out) + chloride(in). In terms of biological role, sodium-independent anion exchanger which mediates the electroneutral exchange of chloride for bicarbonate ions across the cell membrane. Plays an important role in osteoclast differentiation and function. Regulates bone resorption and calpain-dependent actin cytoskeleton organization in osteoclasts via anion exchange-dependent control of pH. Essential for intracellular pH regulation in CD8(+) T-cells upon CD3 stimulation, modulating CD8(+) T-cell response. This chain is Anion exchange protein 2 (SLC4A2), found in Oryctolagus cuniculus (Rabbit).